The primary structure comprises 196 residues: MSRYRGPRLKKIRRLGALPGLTRKTPKSGSNLKKKFHSGKKEQYRIRLQEKQKLRFHYGLTERQLLRYVHIAGKAKRSTGQVLLQLLEMRLDNTLFRLGMASTIPGARQLVNHRHILVNGRIVNIPSFRCKPRDIITTKDNQRSKDLVRNSIASSDPGKLPKHLTIDTLEYKGLVNKILDRKWVGLKINELLVVEY.

A disordered region spans residues 16 to 40 (GALPGLTRKTPKSGSNLKKKFHSGK). The S4 RNA-binding domain maps to 89–152 (MRLDNTLFRL…RSKDLVRNSI (64 aa)).

The protein belongs to the universal ribosomal protein uS4 family. As to quaternary structure, part of the 30S ribosomal subunit. Contacts protein S5. The interaction surface between S4 and S5 is involved in control of translational fidelity.

The protein localises to the plastid. It localises to the chloroplast. One of the primary rRNA binding proteins, it binds directly to 16S rRNA where it nucleates assembly of the body of the 30S subunit. Its function is as follows. With S5 and S12 plays an important role in translational accuracy. This chain is Small ribosomal subunit protein uS4c (rps4), found in Anthoxanthum odoratum (Sweet vernal grass).